Consider the following 182-residue polypeptide: UPF0200 protein Mthe_1012 (182 aa).

8 to 15 (GMPGSGKS) is an ATP binding site.

Belongs to the UPF0200 family.

The protein is UPF0200 protein Mthe_1012 of Methanothrix thermoacetophila (strain DSM 6194 / JCM 14653 / NBRC 101360 / PT) (Methanosaeta thermophila).